Reading from the N-terminus, the 725-residue chain is mRNA decay activator protein ZFP36L3 (725 aa).

Low complexity predominate over residues 1–25 (MANNNLNRPLNTNVADSSNSSSTPG). The segment at 1-119 (MANNNLNRPL…KVSGSSSLAT (119 aa)) is disordered. 2 stretches are compositionally biased toward polar residues: residues 42 to 72 (APSS…QSGA) and 100 to 119 (HSLQ…SLAT). 2 C3H1-type zinc fingers span residues 122-150 (RYKT…HGYR) and 160-188 (KYKT…HNQP). Positions 193 to 711 (VLSESTLEEP…ESEFDNTNSS (519 aa)) are necessary for cytoplasmic localization. The interval 276 to 310 (STTAHDADKDPDKDADKDPSNNSANDALAFPQEPG) is disordered. A compositionally biased stretch (basic and acidic residues) spans 280 to 294 (HDADKDPDKDADKDP). 4 helical membrane-spanning segments follow: residues 380–400 (LAPA…AMAL), 420–440 (AALA…GAAM), 441–461 (APGA…MATG), and 468–488 (AAMA…GAAV). Residues 686 to 709 (DEDDFLRRSSSSSSLNESEFDNTN) form a disordered region. Over residues 693–702 (RSSSSSSLNE) the composition is skewed to low complexity.

As to expression, expressed in placenta and extraembryonic tissues (at protein level). Not detected in embryos and fetus.

It localises to the cytoplasm. Its subcellular location is the membrane. Its function is as follows. Placenta-specific zinc-finger RNA-binding protein that destabilizes cytoplasmic AU-rich element (ARE)-containing mRNA transcripts by promoting their poly(A) tail removal or deadenylation, and hence provide a mechanism for attenuating protein synthesis. Binds to the 3'-UTR ARE of placental target mRNAs, such as TNF, HBEGF and LIPG. Involved in placental expression of many genes important for normal placental physiology. This Mus musculus (Mouse) protein is mRNA decay activator protein ZFP36L3.